The primary structure comprises 409 residues: Effector protein BipC (409 aa).

Disordered regions lie at residues 268–287 and 330–396; these read RETGESVRHEIDPGGERMSD and SGGQ…VAND. Residues 360-369 show a composition bias toward low complexity; it reads AQQTAMAAAS. Over residues 370–382 the composition is skewed to basic and acidic residues; it reads ARDEAAHRGRDAA.

This sequence belongs to the SctB/SipC family.

The protein resides in the secreted. In Burkholderia thailandensis (strain ATCC 700388 / DSM 13276 / CCUG 48851 / CIP 106301 / E264), this protein is Effector protein BipC (bipC).